The chain runs to 309 residues: Elongation factor Ts (309 aa).

Positions 80 to 83 (TDFV) are involved in Mg(2+) ion dislocation from EF-Tu.

It belongs to the EF-Ts family.

It localises to the cytoplasm. Its function is as follows. Associates with the EF-Tu.GDP complex and induces the exchange of GDP to GTP. It remains bound to the aminoacyl-tRNA.EF-Tu.GTP complex up to the GTP hydrolysis stage on the ribosome. In Rhodospirillum rubrum (strain ATCC 11170 / ATH 1.1.1 / DSM 467 / LMG 4362 / NCIMB 8255 / S1), this protein is Elongation factor Ts.